The following is a 469-amino-acid chain: 3-isopropylmalate dehydratase large subunit (469 aa).

Positions 347, 407, and 410 each coordinate [4Fe-4S] cluster.

This sequence belongs to the aconitase/IPM isomerase family. LeuC type 1 subfamily. As to quaternary structure, heterodimer of LeuC and LeuD. The cofactor is [4Fe-4S] cluster.

The catalysed reaction is (2R,3S)-3-isopropylmalate = (2S)-2-isopropylmalate. It participates in amino-acid biosynthesis; L-leucine biosynthesis; L-leucine from 3-methyl-2-oxobutanoate: step 2/4. Its function is as follows. Catalyzes the isomerization between 2-isopropylmalate and 3-isopropylmalate, via the formation of 2-isopropylmaleate. This is 3-isopropylmalate dehydratase large subunit from Prochlorococcus marinus (strain NATL1A).